The following is a 558-amino-acid chain: CTP synthase (558 aa).

The amidoligase domain stretch occupies residues 1-267 (MTKFVFVTGG…AQQTLELLNL (267 aa)). Ser13 lines the CTP pocket. Ser13 provides a ligand contact to UTP. ATP contacts are provided by residues 14–19 (SIGKGI) and Asp71. Mg(2+) contacts are provided by Asp71 and Glu141. Residues 148-150 (DIE), 188-193 (KTKPTQ), and Lys224 each bind CTP. Residues 188–193 (KTKPTQ) and Lys224 each bind UTP. A Glutamine amidotransferase type-1 domain is found at 292 to 534 (EVALVGKYVQ…VKASVDYNHV (243 aa)). Residue Gly354 participates in L-glutamine binding. Cys381 functions as the Nucleophile; for glutamine hydrolysis in the catalytic mechanism. L-glutamine-binding positions include 382 to 385 (MGMQ), Glu405, and Arg462. Catalysis depends on residues His507 and Glu509.

The protein belongs to the CTP synthase family. In terms of assembly, homotetramer.

It catalyses the reaction UTP + L-glutamine + ATP + H2O = CTP + L-glutamate + ADP + phosphate + 2 H(+). The enzyme catalyses L-glutamine + H2O = L-glutamate + NH4(+). It carries out the reaction UTP + NH4(+) + ATP = CTP + ADP + phosphate + 2 H(+). It participates in pyrimidine metabolism; CTP biosynthesis via de novo pathway; CTP from UDP: step 2/2. Allosterically activated by GTP, when glutamine is the substrate; GTP has no effect on the reaction when ammonia is the substrate. The allosteric effector GTP functions by stabilizing the protein conformation that binds the tetrahedral intermediate(s) formed during glutamine hydrolysis. Inhibited by the product CTP, via allosteric rather than competitive inhibition. Catalyzes the ATP-dependent amination of UTP to CTP with either L-glutamine or ammonia as the source of nitrogen. Regulates intracellular CTP levels through interactions with the four ribonucleotide triphosphates. The chain is CTP synthase from Gloeothece citriformis (strain PCC 7424) (Cyanothece sp. (strain PCC 7424)).